We begin with the raw amino-acid sequence, 187 residues long: MLLDEGWLAEARRVPSPHYDCRPDDENPSLLVVHNISLPPGEFGGPWIDALFTGTIDPNAHPYFAGIAHLRVSAHCLIRRDGEIVQYVPFDKRAWHAGVSSYQGRERCNDFSIGIELEGTDTLAYTDAQYQQLAAVTNALITRYPAIANNMTGHCNIAPERKTDPGPSFDWARFRALVTPSSHKEMT.

Residues 30 to 167 (LLVVHNISLP…APERKTDPGP (138 aa)) form the N-acetylmuramoyl-L-alanine amidase domain. Position 34 (histidine 34) interacts with Zn(2+). Glutamate 116 serves as the catalytic Proton acceptor. 2 residues coordinate Zn(2+): histidine 154 and aspartate 164.

Belongs to the N-acetylmuramoyl-L-alanine amidase 2 family. It depends on Zn(2+) as a cofactor.

It is found in the cytoplasm. It catalyses the reaction Hydrolyzes the link between N-acetylmuramoyl residues and L-amino acid residues in certain cell-wall glycopeptides.. Amidase activity is inhibited by metal chelators such as EDTA, dipicolinic acid or 1,10-phenanthroline. Functionally, involved in cell wall peptidoglycan recycling. Specifically cleaves the amide bond between the lactyl group of N-acetylmuramic acid and the alpha-amino group of the L-alanine in degradation products containing an anhydro N-acetylmuramyl moiety. Is also involved in beta-lactamase induction. This chain is 1,6-anhydro-N-acetylmuramyl-L-alanine amidase AmpD, found in Citrobacter freundii.